A 344-amino-acid polypeptide reads, in one-letter code: Probable aldo-keto reductase 1 (344 aa).

Residue Tyr63 is the Proton donor of the active site. Residue His130 coordinates substrate. Position 209–219 (209–219) interacts with NADP(+); that stretch reads SPLGLGFFAAG.

Belongs to the aldo/keto reductase family.

This Arabidopsis thaliana (Mouse-ear cress) protein is Probable aldo-keto reductase 1.